The primary structure comprises 968 residues: RNA polymerase-associated protein RapA (968 aa).

The 171-residue stretch at 164–334 (DVGRRHAPRV…FARLRLLDPN (171 aa)) folds into the Helicase ATP-binding domain. 177 to 184 (DEVGLGKT) lines the ATP pocket. Positions 280 to 283 (DEAH) match the DEAH box motif. The Helicase C-terminal domain occupies 490 to 685 (RVEWLMGYLT…ALKAQLEQGR (196 aa)).

The protein belongs to the SNF2/RAD54 helicase family. RapA subfamily. Interacts with the RNAP. Has a higher affinity for the core RNAP than for the holoenzyme. Its ATPase activity is stimulated by binding to RNAP.

Its function is as follows. Transcription regulator that activates transcription by stimulating RNA polymerase (RNAP) recycling in case of stress conditions such as supercoiled DNA or high salt concentrations. Probably acts by releasing the RNAP, when it is trapped or immobilized on tightly supercoiled DNA. Does not activate transcription on linear DNA. Probably not involved in DNA repair. This Salmonella schwarzengrund (strain CVM19633) protein is RNA polymerase-associated protein RapA.